The primary structure comprises 253 residues: MRVHAIEAFDDNYIWAIETNDKDKVIIVDPGEAQPVQQWLEQNSKSIETILVTHHHYDHTGGIAELIEQSPCPVIGPENPEIKTLTKTVTEGDELTVGGIQWQVLTTPGHTLDHISFYTPGFLFCGDTLFSGGCGRMFEGTPEQFTQSLLKLRKLPGETRVFCAHEYTQANVNFALKVEPENAVLQSYAEKVRMLREQEQITLPSTLQLELAINPFLRFDQKSVIAAANKHAESVKNSPEDVFYTIRQWKDNA.

Positions 54, 56, 58, 59, 110, 127, and 165 each coordinate Zn(2+).

Belongs to the metallo-beta-lactamase superfamily. Glyoxalase II family. In terms of assembly, monomer. It depends on Zn(2+) as a cofactor.

It catalyses the reaction an S-(2-hydroxyacyl)glutathione + H2O = a 2-hydroxy carboxylate + glutathione + H(+). The protein operates within secondary metabolite metabolism; methylglyoxal degradation; (R)-lactate from methylglyoxal: step 2/2. Its function is as follows. Thiolesterase that catalyzes the hydrolysis of S-D-lactoyl-glutathione to form glutathione and D-lactic acid. The polypeptide is Hydroxyacylglutathione hydrolase (Idiomarina loihiensis (strain ATCC BAA-735 / DSM 15497 / L2-TR)).